The following is a 266-amino-acid chain: Metallo-beta-lactamase domain-containing protein 1 (266 aa).

Residues 48-71 form a disordered region; it reads LPQTRGPASSHRESPRGSGGAEAA. 7 residues coordinate Zn(2+): H114, H116, D118, H119, H169, D192, and H231. The segment at 229–266 is disordered; it reads PGHGPPFRVLREASQPETEGGGNSQQEPVVGDEEPALH.

Belongs to the metallo-beta-lactamase superfamily. Glyoxalase II family. In terms of assembly, homodimer. Zn(2+) serves as cofactor.

The protein localises to the cytoplasm. The protein resides in the cytosol. It localises to the nucleus. It catalyses the reaction a ribonucleotidyl-ribonucleotide-RNA + H2O = a 3'-end ribonucleotide-RNA + a 5'-end 5'-phospho-ribonucleoside-RNA + H(+). In terms of biological role, endoribonuclease that catalyzes the hydrolysis of histone-coding pre-mRNA 3'-end. Involved in histone pre-mRNA processing during the S-phase of the cell cycle, which is required for entering/progressing through S-phase. Cleaves histone pre-mRNA at a major and a minor cleavage site after the 5'-ACCCA-3' and the 5'-ACCCACA-3' sequence, respectively, and located downstream of the stem-loop. May require the presence of the HDE element located at the histone pre-RNA 3'-end to avoid non-specific cleavage. In Homo sapiens (Human), this protein is Metallo-beta-lactamase domain-containing protein 1.